Consider the following 644-residue polypeptide: Chaperone protein DnaK (644 aa).

Phosphothreonine; by autocatalysis is present on Thr200. The tract at residues 603-644 is disordered; sequence VMAAEQAKSGGAAPGAAPGGAQQAAPDADVVDADFKEVDDKK. Positions 612–630 are enriched in low complexity; it reads GGAAPGAAPGGAQQAAPDA. Over residues 635–644 the composition is skewed to basic and acidic residues; that stretch reads ADFKEVDDKK.

This sequence belongs to the heat shock protein 70 family.

Its function is as follows. Acts as a chaperone. The chain is Chaperone protein DnaK from Polynucleobacter asymbioticus (strain DSM 18221 / CIP 109841 / QLW-P1DMWA-1) (Polynucleobacter necessarius subsp. asymbioticus).